The chain runs to 1034 residues: Vacuolar membrane protease (1034 aa).

At 1–11 (MAVKNPFGFTT) the chain is on the cytoplasmic side. A helical membrane pass occupies residues 12-32 (GPVTFWLIVVYAAFLIPLVWI). The Vacuolar segment spans residues 33–418 (HESVPAVPSS…GFAILELRGL (386 aa)). N-linked (GlcNAc...) asparagine glycans are attached at residues Asn-51 and Asn-141. Zn(2+)-binding residues include His-200 and Asp-212. Glu-246 serves as the catalytic Proton acceptor. The Zn(2+) site is built by Glu-247, Glu-272, and His-345. The helical transmembrane segment at 419-439 (FAWTLTLLIVSPLVLALVTYI) threads the bilayer. The Cytoplasmic segment spans residues 440 to 470 (LSRKDKYYFFSRKVTADEDDEPVSVGGWKGF). A helical membrane pass occupies residues 471–491 (FRFPFALVLSASITVLSAFLI). The Vacuolar segment spans residues 492–497 (RRVNPH). A helical membrane pass occupies residues 498–518 (IIYSSPYAVWAMTLSLFFLVF). The Cytoplasmic segment spans residues 519-536 (WTIAKGASVVRPSALQRG). The chain crosses the membrane as a helical span at residues 537–557 (YAHIWLFVISWVILVAVTAAA). The Vacuolar portion of the chain corresponds to 558–567 (DRFKIASGYP). Residues 568–588 (FAFFHSAVFVSALISLCDLFA) form a helical membrane-spanning segment. The Cytoplasmic segment spans residues 589–703 (LPSKQEFARN…NLPSWTWFFQ (115 aa)). The disordered stretch occupies residues 623-653 (HSHVEDDVAEEPTETTPLRSGENGNGNNGTI). The helical transmembrane segment at 704–724 (LLLLAPITITVFLQIALFIVS) threads the bilayer. Topologically, residues 725–736 (AIHSAAADGNDP) are vacuolar. A helical transmembrane segment spans residues 737 to 757 (ILVYAAIAAFSIIILLPATPF). Residues 758–762 (IHRAS) lie on the Cytoplasmic side of the membrane. The helical transmembrane segment at 763 to 783 (FYLPLFLLLVFFVTLIYNLVA) threads the bilayer. The Vacuolar portion of the chain corresponds to 784–1034 (FPFSAENRLK…LVEGRKKFRA (251 aa)). N-linked (GlcNAc...) asparagine glycans are attached at residues Asn-805, Asn-866, and Asn-879.

Belongs to the peptidase M28 family. It depends on Zn(2+) as a cofactor.

It is found in the vacuole membrane. May be involved in vacuolar sorting and osmoregulation. The polypeptide is Vacuolar membrane protease (Colletotrichum graminicola (strain M1.001 / M2 / FGSC 10212) (Maize anthracnose fungus)).